The chain runs to 710 residues: MASSKELCSIREWAPLTEVIERIPARLQRGFFPANLNLTCVDATEEFLAMGSDAGIVFWYNRHTGEMQKLKAEVATRITCVRVVNSVEYMVAAGCANGQVSIFQIQKELPRDLDLVAPCTKSRPIERYTIRDLHKCVVSCCEWSKNGMKLYSGDRQGVVVLTELDYQAHLSKSVEILSEAYEIVQLSVRQSYLLVATLYRCIVCQMDAQTSQWNITQVGKKDRKQLIDCGAIFLKKQEANKPQLVCGRPGLRFWVADAAGNVSKTVIFRDAVLRSPTWEIPILNPKQRSEPSGTHHTSASTSSTRHSGLADGDVGYVASSNFRQLYLYDGHDSLLVTHDDATLYVLNLDRLKVEAVARGLRKILDFCVCGKEIFVLEGNRTLLRLAPLPEPPNKTAKVIFNPLMPPPVPVLGSHLSQLESPIELQAEPVLQNAEECFELSPVEQLNLNVPIEIAVESPLTQQNRRLEIFRRIGEMDFEQSIVHTTRKTSVGKPPEASGVGIVEIGHETHELRLPLTNAATLMEASYCQMENNGLASPLDMKAAFLQHLPDALSPTTLQKTVAEKAKTLAAELDLPEVHLAPLSQEELHAVQAQTPQISDPLIRCYPTHLEEASIQTSSRENATNPADDYHVGEPVDGIRSFGVSKRKMAPLKFVLSQPKPTLKLEENRDDEEYTSFLPDFRRAGDPLAIHKETPATSDSNTSSEWEFLDN.

2 WD repeats span residues 31–70 (FFPA…MQKL) and 133–172 (LHKC…HLSK). A disordered region spans residues 283–307 (LNPKQRSEPSGTHHTSASTSSTRHS). The segment covering 292 to 307 (SGTHHTSASTSSTRHS) has biased composition (low complexity). Thr488 bears the Phosphothreonine mark. Ser553 bears the Phosphoserine mark. Disordered regions lie at residues 612-635 (ASIQ…GEPV) and 685-710 (DPLA…FLDN). 2 stretches are compositionally biased toward polar residues: residues 613–624 (SIQTSSRENATN) and 694–704 (PATSDSNTSSE).

It belongs to the WD repeat KIAA0329 family.

This Drosophila melanogaster (Fruit fly) protein is WD repeat-containing protein CG11141.